A 306-amino-acid chain; its full sequence is Replication termination factor 2 (306 aa).

Residues 192 to 306 (RAKLEKKTKK…HWVTHTSYCF (115 aa)) are disordered. The segment covering 226–240 (GKSEEADPDPREKKS) has biased composition (basic and acidic residues). Phosphoserine is present on Ser287.

This sequence belongs to the rtf2 family. Interacts with DDI2; probably also interacts with DDI1. Post-translationally, undergoes proteasomal degradation, via DDI1 and DDI2. Removal from stalled replisomes and degradation are required for genome stability.

Its subcellular location is the chromosome. Functionally, replication termination factor which is a component of the elongating replisome. Required for ATR pathway signaling upon DNA damage and has a positive activity during DNA replication. Might function to facilitate fork pausing at replication fork barriers like the rDNA. May be globally required to stimulate ATR signaling after the fork stalls or encounters a lesion. Interacts with nascent DNA. This is Replication termination factor 2 from Rattus norvegicus (Rat).